Consider the following 127-residue polypeptide: Large ribosomal subunit protein uL18 (127 aa).

The interval 1 to 26 (MASTLTVRKSLSDRAKARARRQARGR) is disordered. A compositionally biased stretch (basic residues) spans 17–26 (ARARRQARGR).

It belongs to the universal ribosomal protein uL18 family. Part of the 50S ribosomal subunit; part of the 5S rRNA/L5/L18/L25 subcomplex. Contacts the 5S and 23S rRNAs.

This is one of the proteins that bind and probably mediate the attachment of the 5S RNA into the large ribosomal subunit, where it forms part of the central protuberance. The polypeptide is Large ribosomal subunit protein uL18 (Cutibacterium acnes (strain DSM 16379 / KPA171202) (Propionibacterium acnes)).